A 600-amino-acid polypeptide reads, in one-letter code: Glutamine--fructose-6-phosphate aminotransferase [isomerizing] (600 aa).

Catalysis depends on Cys2, which acts as the Nucleophile; for GATase activity. In terms of domain architecture, Glutamine amidotransferase type-2 spans Cys2–Asp217. 2 SIS domains span residues Ile283–Ile422 and Ile452–Pro590. Catalysis depends on Lys595, which acts as the For Fru-6P isomerization activity.

As to quaternary structure, homodimer.

The protein localises to the cytoplasm. It catalyses the reaction D-fructose 6-phosphate + L-glutamine = D-glucosamine 6-phosphate + L-glutamate. In terms of biological role, catalyzes the first step in hexosamine metabolism, converting fructose-6P into glucosamine-6P using glutamine as a nitrogen source. The chain is Glutamine--fructose-6-phosphate aminotransferase [isomerizing] (glmS) from Bacillus spizizenii (strain ATCC 23059 / NRRL B-14472 / W23) (Bacillus subtilis subsp. spizizenii).